The sequence spans 260 residues: Acetylglutamate kinase (260 aa).

Substrate contacts are provided by residues 45 to 46, Arg67, and Asn159; that span reads GG.

This sequence belongs to the acetylglutamate kinase family. ArgB subfamily.

Its subcellular location is the cytoplasm. It carries out the reaction N-acetyl-L-glutamate + ATP = N-acetyl-L-glutamyl 5-phosphate + ADP. The protein operates within amino-acid biosynthesis; L-arginine biosynthesis; N(2)-acetyl-L-ornithine from L-glutamate: step 2/4. Functionally, catalyzes the ATP-dependent phosphorylation of N-acetyl-L-glutamate. This Aliivibrio fischeri (strain ATCC 700601 / ES114) (Vibrio fischeri) protein is Acetylglutamate kinase.